The chain runs to 183 residues: Ribosome maturation factor RimM (183 aa).

The 80-residue stretch at 104 to 183 (EGDYYWKDLM…TIEVDWDPGF (80 aa)) folds into the PRC barrel domain.

This sequence belongs to the RimM family. In terms of assembly, binds ribosomal protein uS19.

It is found in the cytoplasm. Functionally, an accessory protein needed during the final step in the assembly of 30S ribosomal subunit, possibly for assembly of the head region. Essential for efficient processing of 16S rRNA. May be needed both before and after RbfA during the maturation of 16S rRNA. It has affinity for free ribosomal 30S subunits but not for 70S ribosomes. This is Ribosome maturation factor RimM from Salmonella choleraesuis (strain SC-B67).